The chain runs to 269 residues: MQRIYLFSDATGETVERVVRAALTQFRNVDVKLHRMSRLRTREDISISLDEAAKQPGVIFYTLVDNELAQYLYNEANLRQLEAIDLITPLLYRLASLLGIQPQKEPGLLYQLNSEYYKRMEAVDFTVKQDDGQEPRNLHKADIVLVGVSRTSKTPLSMYLAHKGYKVANVPLVMGIEPPSELYQVDNSRVVGLMIDAQRLVDIRTARLRNMRQNPRGSYADYQRVEEELDFCRRIYRKHPQWQVIDVTNKSVEESAAEILRRFETGIKD.

147 to 154 (GVSRTSKT) is an ADP binding site.

The protein belongs to the pyruvate, phosphate/water dikinase regulatory protein family. PDRP subfamily.

The enzyme catalyses N(tele)-phospho-L-histidyl/L-threonyl-[pyruvate, phosphate dikinase] + ADP = N(tele)-phospho-L-histidyl/O-phospho-L-threonyl-[pyruvate, phosphate dikinase] + AMP + H(+). The catalysed reaction is N(tele)-phospho-L-histidyl/O-phospho-L-threonyl-[pyruvate, phosphate dikinase] + phosphate + H(+) = N(tele)-phospho-L-histidyl/L-threonyl-[pyruvate, phosphate dikinase] + diphosphate. In terms of biological role, bifunctional serine/threonine kinase and phosphorylase involved in the regulation of the pyruvate, phosphate dikinase (PPDK) by catalyzing its phosphorylation/dephosphorylation. The chain is Putative pyruvate, phosphate dikinase regulatory protein from Geotalea daltonii (strain DSM 22248 / JCM 15807 / FRC-32) (Geobacter daltonii).